The primary structure comprises 254 residues: UPF0246 protein CPF_2407 (254 aa).

Belongs to the UPF0246 family.

The sequence is that of UPF0246 protein CPF_2407 from Clostridium perfringens (strain ATCC 13124 / DSM 756 / JCM 1290 / NCIMB 6125 / NCTC 8237 / Type A).